We begin with the raw amino-acid sequence, 415 residues long: Phosphopentomutase (415 aa).

Aspartate 10, aspartate 313, histidine 318, aspartate 354, histidine 355, and histidine 366 together coordinate Mn(2+).

Belongs to the phosphopentomutase family. Requires Mn(2+) as cofactor.

The protein resides in the cytoplasm. The catalysed reaction is 2-deoxy-alpha-D-ribose 1-phosphate = 2-deoxy-D-ribose 5-phosphate. It carries out the reaction alpha-D-ribose 1-phosphate = D-ribose 5-phosphate. Its pathway is carbohydrate degradation; 2-deoxy-D-ribose 1-phosphate degradation; D-glyceraldehyde 3-phosphate and acetaldehyde from 2-deoxy-alpha-D-ribose 1-phosphate: step 1/2. Isomerase that catalyzes the conversion of deoxy-ribose 1-phosphate (dRib-1-P) and ribose 1-phosphate (Rib-1-P) to deoxy-ribose 5-phosphate (dRib-5-P) and ribose 5-phosphate (Rib-5-P), respectively. This chain is Phosphopentomutase, found in Psychromonas ingrahamii (strain DSM 17664 / CCUG 51855 / 37).